We begin with the raw amino-acid sequence, 490 residues long: Bifunctional protein HldE (490 aa).

Residues 1-330 (MFSFDALLQA…RRILPHASLA (330 aa)) form a ribokinase region. 205 to 208 (NRKE) serves as a coordination point for ATP. Asp275 is a catalytic residue. The interval 358–490 (FTNGCFDILH…LVARAREGQS (133 aa)) is cytidylyltransferase.

In the N-terminal section; belongs to the carbohydrate kinase PfkB family. The protein in the C-terminal section; belongs to the cytidylyltransferase family. In terms of assembly, homodimer.

It catalyses the reaction D-glycero-beta-D-manno-heptose 7-phosphate + ATP = D-glycero-beta-D-manno-heptose 1,7-bisphosphate + ADP + H(+). It carries out the reaction D-glycero-beta-D-manno-heptose 1-phosphate + ATP + H(+) = ADP-D-glycero-beta-D-manno-heptose + diphosphate. The protein operates within nucleotide-sugar biosynthesis; ADP-L-glycero-beta-D-manno-heptose biosynthesis; ADP-L-glycero-beta-D-manno-heptose from D-glycero-beta-D-manno-heptose 7-phosphate: step 1/4. It functions in the pathway nucleotide-sugar biosynthesis; ADP-L-glycero-beta-D-manno-heptose biosynthesis; ADP-L-glycero-beta-D-manno-heptose from D-glycero-beta-D-manno-heptose 7-phosphate: step 3/4. Catalyzes the phosphorylation of D-glycero-D-manno-heptose 7-phosphate at the C-1 position to selectively form D-glycero-beta-D-manno-heptose-1,7-bisphosphate. Functionally, catalyzes the ADP transfer from ATP to D-glycero-beta-D-manno-heptose 1-phosphate, yielding ADP-D-glycero-beta-D-manno-heptose. This Rhodopseudomonas palustris (strain ATCC BAA-98 / CGA009) protein is Bifunctional protein HldE.